Consider the following 91-residue polypeptide: uncharacterized protein (91 aa).

Positions 71-91 are disordered; that stretch reads EANDRPSKKCGSGNLRVEKLV.

This is an uncharacterized protein from Archaeoglobus fulgidus (strain ATCC 49558 / DSM 4304 / JCM 9628 / NBRC 100126 / VC-16).